The sequence spans 79 residues: Small ribosomal subunit protein uS17 (79 aa).

It belongs to the universal ribosomal protein uS17 family. Part of the 30S ribosomal subunit.

Functionally, one of the primary rRNA binding proteins, it binds specifically to the 5'-end of 16S ribosomal RNA. The protein is Small ribosomal subunit protein uS17 of Roseobacter denitrificans (strain ATCC 33942 / OCh 114) (Erythrobacter sp. (strain OCh 114)).